Reading from the N-terminus, the 1217-residue chain is CST complex subunit CTC1 (1217 aa).

Residues 328-347 (EADPKPLPMPSNSEDKKDPE) are disordered.

Belongs to the CTC1 family. In terms of assembly, component of the CST complex, composed of TEN1/C17orf106, CTC1/C17orf68 and STN1; in the complex interacts directly with STN1. Interacts with ACD and POT1.

Its subcellular location is the nucleus. The protein resides in the chromosome. It localises to the telomere. Functionally, component of the CST complex proposed to act as a specialized replication factor promoting DNA replication under conditions of replication stress or natural replication barriers such as the telomere duplex. The CST complex binds single-stranded DNA with high affinity in a sequence-independent manner, while isolated subunits bind DNA with low affinity by themselves. Initially the CST complex has been proposed to protect telomeres from DNA degradation. However, the CST complex has been shown to be involved in several aspects of telomere replication. The CST complex inhibits telomerase and is involved in telomere length homeostasis; it is proposed to bind to newly telomerase-synthesized 3' overhangs and to terminate telomerase action implicating the association with the ACD:POT1 complex thus interfering with its telomerase stimulation activity. The CST complex is also proposed to be involved in fill-in synthesis of the telomeric C-strand probably implicating recruitment and activation of DNA polymerase alpha. The CST complex facilitates recovery from many forms of exogenous DNA damage; seems to be involved in the re-initiation of DNA replication at repaired forks and/or dormant origins. Involved in telomere maintenance. Involved in genome stability. May be in involved in telomeric C-strand fill-in during late S/G2 phase. This is CST complex subunit CTC1 (CTC1) from Homo sapiens (Human).